The sequence spans 146 residues: Deoxyuridine 5'-triphosphate nucleotidohydrolase (146 aa).

Residues 65 to 67, Asn78, and 82 to 84 contribute to the substrate site; these read RSG and TID.

It belongs to the dUTPase family. It depends on Mg(2+) as a cofactor.

It catalyses the reaction dUTP + H2O = dUMP + diphosphate + H(+). The protein operates within pyrimidine metabolism; dUMP biosynthesis; dUMP from dCTP (dUTP route): step 2/2. This enzyme is involved in nucleotide metabolism: it produces dUMP, the immediate precursor of thymidine nucleotides and it decreases the intracellular concentration of dUTP so that uracil cannot be incorporated into DNA. The chain is Deoxyuridine 5'-triphosphate nucleotidohydrolase from Treponema pallidum subsp. pallidum (strain SS14).